A 194-amino-acid chain; its full sequence is RNA polymerase II subunit A C-terminal domain phosphatase SSU72 like protein 5 (194 aa).

Belongs to the SSU72 phosphatase family.

The protein resides in the nucleus. It catalyses the reaction O-phospho-L-seryl-[protein] + H2O = L-seryl-[protein] + phosphate. It carries out the reaction O-phospho-L-threonyl-[protein] + H2O = L-threonyl-[protein] + phosphate. Functionally, protein phosphatase that catalyzes the dephosphorylation of the C-terminal domain of RNA polymerase II. Plays a role in RNA processing and termination. The polypeptide is RNA polymerase II subunit A C-terminal domain phosphatase SSU72 like protein 5 (Homo sapiens (Human)).